Consider the following 630-residue polypeptide: Adagio-like protein 1 (630 aa).

A disordered region spans residues 1–36; that stretch reads MEWDSESDGAGSIGAGEEEEEEEEEEEGGFGGGGGG. Residues 16–28 show a composition bias toward acidic residues; sequence GEEEEEEEEEEEG. Residues 48–127 form the PAS domain; that stretch reads IEGMLRASGP…SEIRKCIDNG (80 aa). An S-4a-FMN cysteine modification is found at Cys95. The F-box domain maps to 216-262; the sequence is SSLFQLTDEVLCQSILSRLSPRDIASVSSVCRRLYLLTRNEDLWRMV. Kelch repeat units follow at residues 378 to 428, 430 to 481, 483 to 535, and 549 to 601; these read LLVV…TLDG, KLVV…VYGG, KILM…AGPP, and RVLI…VVGG.

This sequence belongs to the ADAGIO family. Post-translationally, FMN binds covalently to cysteine after exposure to blue light and is reversed in the dark.

Its subcellular location is the nucleus. It participates in protein modification; protein ubiquitination. Component of an E3 ubiquitin ligase complex that plays a central role in blue light-dependent circadian cycles. Acts as a blue light photoreceptor, due to the presence of FMN, that mediates light-regulated protein degradation of critical clock components by targeting them to the proteasome complex. The sequence is that of Adagio-like protein 1 from Oryza sativa subsp. japonica (Rice).